A 136-amino-acid polypeptide reads, in one-letter code: Small ribosomal subunit protein uS12 (136 aa).

D89 is modified (3-methylthioaspartic acid). Residues 101 to 136 (SLDTSGVADRKQSRSKYGAKQPKAGVPAPVKGKGKR) form a disordered region.

This sequence belongs to the universal ribosomal protein uS12 family. As to quaternary structure, part of the 30S ribosomal subunit. Contacts proteins S8 and S17. May interact with IF1 in the 30S initiation complex.

With S4 and S5 plays an important role in translational accuracy. Functionally, interacts with and stabilizes bases of the 16S rRNA that are involved in tRNA selection in the A site and with the mRNA backbone. Located at the interface of the 30S and 50S subunits, it traverses the body of the 30S subunit contacting proteins on the other side and probably holding the rRNA structure together. The combined cluster of proteins S8, S12 and S17 appears to hold together the shoulder and platform of the 30S subunit. This Pelodictyon phaeoclathratiforme (strain DSM 5477 / BU-1) protein is Small ribosomal subunit protein uS12.